A 485-amino-acid chain; its full sequence is Cysteine--tRNA ligase (485 aa).

Zn(2+) is bound at residue Cys27. A 'HIGH' region motif is present at residues 29–39; it reads ITAYDLCHLGH. 3 residues coordinate Zn(2+): Cys208, His233, and Glu237. Positions 265-269 match the 'KMSKS' region motif; the sequence is KMSKS. Lys268 is an ATP binding site.

The protein belongs to the class-I aminoacyl-tRNA synthetase family. Monomer. It depends on Zn(2+) as a cofactor.

The protein localises to the cytoplasm. It catalyses the reaction tRNA(Cys) + L-cysteine + ATP = L-cysteinyl-tRNA(Cys) + AMP + diphosphate. In Oleidesulfovibrio alaskensis (strain ATCC BAA-1058 / DSM 17464 / G20) (Desulfovibrio alaskensis), this protein is Cysteine--tRNA ligase.